Consider the following 74-residue polypeptide: MKSFYHYLLKYRHPKPKDSISEFANQAYEDHSFPKTSTDYHEISSYLELNADYLHTMATFDEAWDQYESEVHGR.

The protein belongs to the UPF0346 family.

In Bacillus subtilis (strain 168), this protein is UPF0346 protein YozE (yozE).